We begin with the raw amino-acid sequence, 130 residues long: Granulin (130 aa).

The signal sequence occupies residues 1–26; that stretch reads MNYSKIFIFGIISLILMALFSSTVES. Cystine bridges form between Cys67–Cys79 and Cys73–Cys89.

This sequence belongs to the granulin family. In terms of processing, granulins are disulfide bridged.

It localises to the secreted. In Dictyostelium discoideum (Social amoeba), this protein is Granulin (grn).